The primary structure comprises 194 residues: Small ribosomal subunit protein uS4c (194 aa).

The segment at 13–36 (GLTSKRPRSGSDPKNQLRSGKKSQ) is disordered. An S4 RNA-binding domain is found at 82-143 (MRLDNILFRL…KQRSKALIQN (62 aa)).

Belongs to the universal ribosomal protein uS4 family. Part of the 30S ribosomal subunit. Contacts protein S5. The interaction surface between S4 and S5 is involved in control of translational fidelity.

It is found in the plastid. The protein localises to the chloroplast. Functionally, one of the primary rRNA binding proteins, it binds directly to 16S rRNA where it nucleates assembly of the body of the 30S subunit. With S5 and S12 plays an important role in translational accuracy. This is Small ribosomal subunit protein uS4c (rps4) from Moraea spathulata (Large yellow moraea).